Consider the following 103-residue polypeptide: Large ribosomal subunit protein bL21 (103 aa).

It belongs to the bacterial ribosomal protein bL21 family. In terms of assembly, part of the 50S ribosomal subunit. Contacts protein L20.

This protein binds to 23S rRNA in the presence of protein L20. The chain is Large ribosomal subunit protein bL21 from Pseudomonas aeruginosa (strain LESB58).